Here is a 774-residue protein sequence, read N- to C-terminus: MSLLLTIAKEYKRLCQDAKAAQMMTVGTVSNYTTFKKWTTSRKEKNPSLRMRWAMSSKFPIIANKRMLEEAQIPKEHNNVALWEDTEDVSKRDHVLASTSCINYWNFCGPCANNSEVIKEVYKSRFGRLERRKEIMWKELRFTLVDRQRRRVDTQPVEQRLRTGEIKDLQMWTLFEDEAPLASKFILDNYGLVKEMRSKFANKPLNKEVVAHMLEKQFNPESRFLPVFGAIRPERMELIHALGGETWIQEANTAGISNVDQRKNDMRAVCRKVCLAANASIMNAKSKLVEYIKSTSMRIGETERKLEELILETDDVSPEVTLCKSALGGPLGKTLSFGPMLLKKISGSGVKVKDTVYIQGVRAVQFEYWSEQEEFYGEYKSATALFSRKERSLEWITIGGGINEDRKRLLAMCMIFCRDGDYFKDAPATITMADLSTKLGREIPYQYVMMNWIQKSEDNLEALLYSRGIVETNPGKMGSSMGIDGSKRAIKSLRAVTIQSGKIDMPESKEKIHLELSDNLEAFDSSGRIVATILDLPSDKKVTFQDVSFQHPDLAVLRDEKTAITKGYEALIKRLGTGDNDIPSLIAKKDYLSLYNLPEVKLMAPLIRPNRKGVYSRVARKLVSTQVTTGHYSLHELIKVLPFTYFAPKQGMFEGRLFFSNDSFVEPGVNNNVFSWSKADSSKIYCHGIAIRVPLVVGDEHMDTSLALLEGFSVCENDPRAPMVTRQDLIDVGFGQKVRLFIGQGSVRTFKRTASQRAASSDVNKNVKKIKMSN.

Belongs to the influenza viruses PB2 family. As to quaternary structure, influenza RNA polymerase is composed of three subunits: PB1, PB2 and PA. Interacts (via N-terminus) with PB1 (via C-terminus). Interacts with nucleoprotein NP (via N-terminus).

Its subcellular location is the virion. It localises to the host nucleus. Functionally, plays an essential role in transcription initiation and cap-stealing mechanism, in which cellular capped pre-mRNAs are used to generate primers for viral transcription. Recognizes and binds a wide range of cap structures of target pre-RNAs which are subsequently cleaved after 10-13 nucleotides by the viral protein PA. Plays a role in the initiation of the viral genome replication and modulates the activity of the ribonucleoprotein (RNP) complex. The chain is Polymerase basic protein 2 from Homo sapiens (Human).